We begin with the raw amino-acid sequence, 607 residues long: Polypeptide N-acetylgalactosaminyltransferase 18 (607 aa).

Residues 1–12 (MVCTRKTKTLVS) are Cytoplasmic-facing. The chain crosses the membrane as a helical; Signal-anchor for type II membrane protein span at residues 13 to 35 (TCVILSGMTNIICLLYVGWVTNY). Residues 36–607 (IASVYVRGQE…ITNVLRSLAS (572 aa)) lie on the Lumenal side of the membrane. 5 cysteine pairs are disulfide-bonded: Cys144/Cys377, Cys368/Cys447, Cys482/Cys498, Cys530/Cys543, and Cys571/Cys591. The N-linked (GlcNAc...) asparagine glycan is linked to Asn146. Residues 153-267 (LPEVSIVFIF…VGWAEPVLTR (115 aa)) form a catalytic subdomain A region. A substrate-binding site is contributed by Asp194. N-linked (GlcNAc...) asparagine glycosylation occurs at Asn195. Mn(2+)-binding residues include Asp251 and His253. Asn320 is a glycosylation site (N-linked (GlcNAc...) asparagine). Positions 324–385 (PIRSPALIGC…PCSRIAHIER (62 aa)) are catalytic subdomain B. His382 lines the Mn(2+) pocket. Substrate-binding residues include Arg385 and Tyr390. The region spanning 469–599 (AYGVLQNSLK…KCSGQHWSIT (131 aa)) is the Ricin B-type lectin domain.

The protein belongs to the glycosyltransferase 2 family. GalNAc-T subfamily. The cofactor is Mn(2+).

The protein localises to the golgi apparatus membrane. The catalysed reaction is L-seryl-[protein] + UDP-N-acetyl-alpha-D-galactosamine = a 3-O-[N-acetyl-alpha-D-galactosaminyl]-L-seryl-[protein] + UDP + H(+). It carries out the reaction L-threonyl-[protein] + UDP-N-acetyl-alpha-D-galactosamine = a 3-O-[N-acetyl-alpha-D-galactosaminyl]-L-threonyl-[protein] + UDP + H(+). It participates in protein modification; protein glycosylation. Functionally, catalyzes the initial reaction in O-linked oligosaccharide biosynthesis, the transfer of an N-acetyl-D-galactosamine (GalNAc) residue from UDP-GalNAc to a serine or threonine residue on the protein receptor. The polypeptide is Polypeptide N-acetylgalactosaminyltransferase 18 (GALNT18) (Homo sapiens (Human)).